The chain runs to 432 residues: D-amino acid dehydrogenase (432 aa).

3-17 (VVILGSGVVGVTSAW) is a binding site for FAD.

This sequence belongs to the DadA oxidoreductase family. It depends on FAD as a cofactor.

The protein localises to the cell inner membrane. The catalysed reaction is a D-alpha-amino acid + A + H2O = a 2-oxocarboxylate + AH2 + NH4(+). It functions in the pathway amino-acid degradation; D-alanine degradation; NH(3) and pyruvate from D-alanine: step 1/1. In terms of biological role, oxidative deamination of D-amino acids. This chain is D-amino acid dehydrogenase, found in Salmonella typhi.